We begin with the raw amino-acid sequence, 103 residues long: Cell division protein FtsB (103 aa).

Over 1–3 (MGK) the chain is Cytoplasmic. A helical membrane pass occupies residues 4–21 (LTLLLLAILVWLQYSLWF). Topologically, residues 22 to 103 (GKNGIHDYSR…RAQTAGQNNR (82 aa)) are periplasmic. A coiled-coil region spans residues 31-71 (RVNDDVAAQQATNAKLKARNDQLFAEIDDLNGGQEALEERA).

The protein belongs to the FtsB family. Part of a complex composed of FtsB, FtsL and FtsQ.

It localises to the cell inner membrane. Essential cell division protein. May link together the upstream cell division proteins, which are predominantly cytoplasmic, with the downstream cell division proteins, which are predominantly periplasmic. This chain is Cell division protein FtsB, found in Escherichia fergusonii (strain ATCC 35469 / DSM 13698 / CCUG 18766 / IAM 14443 / JCM 21226 / LMG 7866 / NBRC 102419 / NCTC 12128 / CDC 0568-73).